Reading from the N-terminus, the 85-residue chain is ELKYQLLKKYSGYLSSLRQEFSKKKKKGKLPKEARQKLLHWWELHYKWPYPSETEKIALAEATGLDQKQINNWFINQRKRHWKPS.

One can recognise an ELK domain in the interval 1-21; that stretch reads ELKYQLLKKYSGYLSSLRQEF. Residues 22–85 constitute a DNA-binding region (homeobox; TALE-type); that stretch reads SKKKKKGKLP…NQRKRHWKPS (64 aa).

It belongs to the TALE/KNOX homeobox family. Strongly expressed in ear inflorescence primordia and shoot meristem. Weakly expressed in embryos. Absent from leaves.

The protein resides in the nucleus. Probably binds to the DNA sequence 5'-TGAC-3'. This chain is Homeobox protein knotted-1-like 4 (KNOX4), found in Zea mays (Maize).